The chain runs to 157 residues: 2-C-methyl-D-erythritol 2,4-cyclodiphosphate synthase (157 aa).

A divalent metal cation is bound by residues Asp8 and His10. Residues Asp8–His10 and His34–Ser35 contribute to the 4-CDP-2-C-methyl-D-erythritol 2-phosphate site. His42 is an a divalent metal cation binding site. 4-CDP-2-C-methyl-D-erythritol 2-phosphate-binding positions include Asp56 to Gly58, Phe61 to Asp65, Ala100 to Ala106, Thr132 to Glu135, Phe139, and Arg142.

The protein belongs to the IspF family. As to quaternary structure, homotrimer. Requires a divalent metal cation as cofactor.

It carries out the reaction 4-CDP-2-C-methyl-D-erythritol 2-phosphate = 2-C-methyl-D-erythritol 2,4-cyclic diphosphate + CMP. It functions in the pathway isoprenoid biosynthesis; isopentenyl diphosphate biosynthesis via DXP pathway; isopentenyl diphosphate from 1-deoxy-D-xylulose 5-phosphate: step 4/6. Involved in the biosynthesis of isopentenyl diphosphate (IPP) and dimethylallyl diphosphate (DMAPP), two major building blocks of isoprenoid compounds. Catalyzes the conversion of 4-diphosphocytidyl-2-C-methyl-D-erythritol 2-phosphate (CDP-ME2P) to 2-C-methyl-D-erythritol 2,4-cyclodiphosphate (ME-CPP) with a corresponding release of cytidine 5-monophosphate (CMP). The sequence is that of 2-C-methyl-D-erythritol 2,4-cyclodiphosphate synthase from Pseudomonas putida (strain GB-1).